A 226-amino-acid polypeptide reads, in one-letter code: MLRYHTSKNNFPLASDLRRQRERMVITQLEQRGITNSYVLTAMRNVHRHLFVPEALQSRAYDDYPLPIGYGQTISRPYIVAIMTSLLEPTPGLSVLEIGTGSGYQTAILANIGLEVFSLERVRELYFQTKELFFLLGYRKIRTCLSDGTLGWEEHAPFDRIIVTAGGPNIPLPLLNQLGDPGVMVIPVGQNPREQELMCITKKNNTVTSTVIGNVAFVDLVGDYGW.

The active site involves S75.

The protein belongs to the methyltransferase superfamily. L-isoaspartyl/D-aspartyl protein methyltransferase family.

It is found in the cytoplasm. The enzyme catalyses [protein]-L-isoaspartate + S-adenosyl-L-methionine = [protein]-L-isoaspartate alpha-methyl ester + S-adenosyl-L-homocysteine. Its function is as follows. Catalyzes the methyl esterification of L-isoaspartyl residues in peptides and proteins that result from spontaneous decomposition of normal L-aspartyl and L-asparaginyl residues. It plays a role in the repair and/or degradation of damaged proteins. This is Protein-L-isoaspartate O-methyltransferase from Lawsonia intracellularis (strain PHE/MN1-00).